A 238-amino-acid polypeptide reads, in one-letter code: Cell division protein A (238 aa).

In terms of assembly, interacts with CdvB.

Its subcellular location is the cytoplasm. The protein localises to the nucleoid. It is found in the cell membrane. Part of a cell division machinery. The CdvA, CdvB and CdvC proteins polymerize between segregating nucleoids and persist throughout cell division, forming a successively smaller structure during constriction. CdvA is a membrane interacting protein that recruits ESCRT-III homologs to the membrane. This Sulfolobus acidocaldarius (strain ATCC 33909 / DSM 639 / JCM 8929 / NBRC 15157 / NCIMB 11770) protein is Cell division protein A.